We begin with the raw amino-acid sequence, 436 residues long: MSVSARSAAAEERSVNCGTMAQPKNLEGYVGFANLPNQVYRKSVKRGFEFTLMVVGESGLGKSTLINSLFLTDLYSPEYPGPSHRIKKTVQVEQSKVLIKEGGVQLLLTIVDTPGFGDAVDNSNCWQPVIDYIDSKFEDYLNAESRVNRRQMPDNRVQCCLYFIAPSGHGLKPLDIEFMKRLHEKVNIIPLIAKADTLTPEECQQFKKQIMKEIQEHKIKIYEFPETDDEEENKLVKKIKDRLPLAVVGSNTIIEVNGKRVRGRQYPWGVAEVENGEHCDFTILRNMLIRTHMQDLKDVTNNVHYENYRSRKLAAVTYNGVDNNKNKGQLTKSPLAQMEEERREHVAKMKKMEMEMEQVFEMKVKEKVQKLKDSEAELQRRHEQMKKNLEAQHKELEEKRRQFEEEKANWEAQQRILEQQNSSRTLEKNKKKGKIF.

The residue at position 2 (Ser2) is an N-acetylserine. The residue at position 29 (Tyr29) is a Phosphotyrosine. The Septin-type G domain maps to 46-315 (RGFEFTLMVV…ENYRSRKLAA (270 aa)). The segment at 46-316 (RGFEFTLMVV…NYRSRKLAAV (271 aa)) is interaction with SEPTIN12. The G1 motif stretch occupies residues 56 to 63 (GESGLGKS). 56 to 63 (GESGLGKS) is a binding site for GTP. Ser76 bears the Phosphoserine mark. GTP contacts are provided by residues Thr89, Gly115, and 194–202 (KADTLTPEE). Positions 112–115 (DTPG) are G3 motif. The tract at residues 193–196 (AKAD) is G4 motif. At Thr227 the chain carries Phosphothreonine. GTP-binding residues include Gly249 and Arg264. Residues 331–436 (TKSPLAQMEE…EKNKKKGKIF (106 aa)) adopt a coiled-coil conformation. The residue at position 333 (Ser333) is a Phosphoserine. Lys372 carries the post-translational modification N6-acetyllysine. Basic and acidic residues predominate over residues 377–409 (ELQRRHEQMKKNLEAQHKELEEKRRQFEEEKAN). The interval 377–436 (ELQRRHEQMKKNLEAQHKELEEKRRQFEEEKANWEAQQRILEQQNSSRTLEKNKKKGKIF) is disordered. Ser423 is modified (phosphoserine). Phosphothreonine is present on Thr425.

Belongs to the TRAFAC class TrmE-Era-EngA-EngB-Septin-like GTPase superfamily. Septin GTPase family. As to quaternary structure, septins polymerize into heterooligomeric protein complexes that form filaments, and associate with cellular membranes, actin filaments and microtubules. GTPase activity is required for filament formation. Filaments are assembled from asymmetrical heterotrimers, composed of SEPTIN2, SEPTIN6 and SEPTIN7 that associate head-to-head to form a hexameric unit. Within the trimer, directly interacts with SEPTIN6, while interaction with SEPTIN2 seems indirect. In the absence of SEPTIN6, forms homodimers. Interacts directly with CENPE and links CENPE to septin filaments composed of SEPTIN2, SEPTIN6 and SEPTIN7. Interacts with SEPTIN8, SEPTIN9 and SEPTIN11. Component of a septin core octameric complex consisting of SEPTIN12, SEPTIN7, SEPTIN6 and SEPTIN2 or SEPTIN4 in the order 12-7-6-2-2-6-7-12 or 12-7-6-4-4-6-7-12 and located in the sperm annulus; the SEPTIN12:SEPTIN7 association is mediated by the respective GTP-binding domains. Interacts with SEPTIN2 and SEPTIN5. In terms of tissue distribution, expressed in the cerebral cortex (at protein level).

It is found in the cytoplasm. It localises to the chromosome. The protein resides in the centromere. Its subcellular location is the kinetochore. The protein localises to the cytoskeleton. It is found in the spindle. It localises to the cleavage furrow. The protein resides in the midbody. Its subcellular location is the cilium axoneme. The protein localises to the cell projection. It is found in the cilium. It localises to the flagellum. In terms of biological role, filament-forming cytoskeletal GTPase. Required for normal organization of the actin cytoskeleton. Required for normal progress through mitosis. Involved in cytokinesis. Required for normal association of CENPE with the kinetochore. Plays a role in ciliogenesis and collective cell movements. Forms a filamentous structure with SEPTIN12, SEPTIN6, SEPTIN2 and probably SEPTIN4 at the sperm annulus which is required for the structural integrity and motility of the sperm tail during postmeiotic differentiation. This Mus musculus (Mouse) protein is Septin-7.